We begin with the raw amino-acid sequence, 458 residues long: Transcription factor ORF10 (458 aa).

The zn(2)-C6 fungal-type DNA-binding region spans 38-65 (CESCRLKKLRCSGHKSGCDRCRSQAMKC). A disordered region spans residues 69 to 109 (IGAPSNSSRPKSRSHFQPNFSNMSGTAGTSKAPSPLGNDGV). A compositionally biased stretch (polar residues) spans 71 to 100 (APSNSSRPKSRSHFQPNFSNMSGTAGTSKA).

It localises to the nucleus. Its function is as follows. Transcription factor that specifically regulates the expression of the gene cluster that mediates the biosynthesis of PR-toxin, a bicyclic sesquiterpene belonging to the eremophilane class and acting as a mycotoxin. This is Transcription factor ORF10 from Penicillium roqueforti (strain FM164).